A 345-amino-acid polypeptide reads, in one-letter code: Phosphoribosylformylglycinamidine cyclo-ligase (345 aa).

The protein belongs to the AIR synthase family.

It is found in the cytoplasm. It catalyses the reaction 2-formamido-N(1)-(5-O-phospho-beta-D-ribosyl)acetamidine + ATP = 5-amino-1-(5-phospho-beta-D-ribosyl)imidazole + ADP + phosphate + H(+). It functions in the pathway purine metabolism; IMP biosynthesis via de novo pathway; 5-amino-1-(5-phospho-D-ribosyl)imidazole from N(2)-formyl-N(1)-(5-phospho-D-ribosyl)glycinamide: step 2/2. The chain is Phosphoribosylformylglycinamidine cyclo-ligase from Shewanella loihica (strain ATCC BAA-1088 / PV-4).